A 426-amino-acid chain; its full sequence is Tyrosine--tRNA ligase (426 aa).

An L-tyrosine-binding site is contributed by Tyr-36. The short motif at Pro-41–His-50 is the 'HIGH' region element. 2 residues coordinate L-tyrosine: Tyr-174 and Gln-178. The 'KMSKS' region signature appears at Lys-234–Ser-238. Residue Lys-237 coordinates ATP. One can recognise an S4 RNA-binding domain in the interval Asp-359–Gly-416.

The protein belongs to the class-I aminoacyl-tRNA synthetase family. TyrS type 1 subfamily. As to quaternary structure, homodimer.

It localises to the cytoplasm. The catalysed reaction is tRNA(Tyr) + L-tyrosine + ATP = L-tyrosyl-tRNA(Tyr) + AMP + diphosphate + H(+). Functionally, catalyzes the attachment of tyrosine to tRNA(Tyr) in a two-step reaction: tyrosine is first activated by ATP to form Tyr-AMP and then transferred to the acceptor end of tRNA(Tyr). This Mycobacterium leprae (strain TN) protein is Tyrosine--tRNA ligase.